The chain runs to 711 residues: Ribosomal RNA large subunit methyltransferase K/L (711 aa).

The region spanning 43–154 is the THUMP domain; the sequence is LAYRITLWSR…RGQITLGINF (112 aa).

It belongs to the methyltransferase superfamily. RlmKL family.

It is found in the cytoplasm. The enzyme catalyses guanosine(2445) in 23S rRNA + S-adenosyl-L-methionine = N(2)-methylguanosine(2445) in 23S rRNA + S-adenosyl-L-homocysteine + H(+). It carries out the reaction guanosine(2069) in 23S rRNA + S-adenosyl-L-methionine = N(2)-methylguanosine(2069) in 23S rRNA + S-adenosyl-L-homocysteine + H(+). In terms of biological role, specifically methylates the guanine in position 2445 (m2G2445) and the guanine in position 2069 (m7G2069) of 23S rRNA. This chain is Ribosomal RNA large subunit methyltransferase K/L, found in Shewanella loihica (strain ATCC BAA-1088 / PV-4).